Here is a 229-residue protein sequence, read N- to C-terminus: Orotidine 5'-phosphate decarboxylase (229 aa).

Substrate contacts are provided by residues Asp11, Lys33, 60–69 (DLKFHDIPNT), Thr119, Arg180, Gln189, Gly209, and Arg210. Lys62 acts as the Proton donor in catalysis.

The protein belongs to the OMP decarboxylase family. Type 1 subfamily. Homodimer.

The catalysed reaction is orotidine 5'-phosphate + H(+) = UMP + CO2. The protein operates within pyrimidine metabolism; UMP biosynthesis via de novo pathway; UMP from orotate: step 2/2. Its function is as follows. Catalyzes the decarboxylation of orotidine 5'-monophosphate (OMP) to uridine 5'-monophosphate (UMP). This is Orotidine 5'-phosphate decarboxylase from Dichelobacter nodosus (strain VCS1703A).